The chain runs to 210 residues: Putative odorant-binding protein A5 (210 aa).

The N-terminal stretch at 1–19 (MKLPALHLLFLGFICLARS) is a signal peptide.

It belongs to the phosphatidylethanolamine-binding protein family. As to expression, cells at the bases of a few scattered sensilla on the posterior surface of the antenna.

The protein resides in the secreted. In Drosophila melanogaster (Fruit fly), this protein is Putative odorant-binding protein A5 (a5).